A 1070-amino-acid chain; its full sequence is DNA-directed RNA polymerase subunit beta (1070 aa).

The protein belongs to the RNA polymerase beta chain family. As to quaternary structure, in plastids the minimal PEP RNA polymerase catalytic core is composed of four subunits: alpha, beta, beta', and beta''. When a (nuclear-encoded) sigma factor is associated with the core the holoenzyme is formed, which can initiate transcription.

It is found in the plastid. Its subcellular location is the chloroplast. The enzyme catalyses RNA(n) + a ribonucleoside 5'-triphosphate = RNA(n+1) + diphosphate. Its function is as follows. DNA-dependent RNA polymerase catalyzes the transcription of DNA into RNA using the four ribonucleoside triphosphates as substrates. The polypeptide is DNA-directed RNA polymerase subunit beta (Piper cenocladum (Ant piper)).